A 130-amino-acid polypeptide reads, in one-letter code: Small ribosomal subunit protein uS9 (130 aa).

The protein belongs to the universal ribosomal protein uS9 family.

This Burkholderia mallei (strain NCTC 10247) protein is Small ribosomal subunit protein uS9.